The sequence spans 131 residues: Fumarate reductase subunit C (131 aa).

The next 3 membrane-spanning stretches (helical) occupy residues 30 to 50 (EGTAVPAVWFSIELIFGLFAL), 57 to 77 (WMGFVGFLQNPVVVILNLIAL), and 109 to 129 (IIKGLWVVTAVVTVVILYVAL).

The protein belongs to the FrdC family. In terms of assembly, part of an enzyme complex containing four subunits: a flavoprotein (FrdA), an iron-sulfur protein (FrdB), and two hydrophobic anchor proteins (FrdC and FrdD).

Its subcellular location is the cell inner membrane. Functionally, two distinct, membrane-bound, FAD-containing enzymes are responsible for the catalysis of fumarate and succinate interconversion; fumarate reductase is used in anaerobic growth, and succinate dehydrogenase is used in aerobic growth. Anchors the catalytic components of the fumarate reductase complex to the cell inner membrane, binds quinones. The protein is Fumarate reductase subunit C of Citrobacter koseri (strain ATCC BAA-895 / CDC 4225-83 / SGSC4696).